The chain runs to 330 residues: MTHTLRVIFAGTPEFAAAALAAIHKAGFPVPLVLTQPDRPAGRGMKLQASAVKRYAVEHGMAVAQPPSLRRAGKYPAEAADAIELLRTTPHDVMVVAAYGLLLPQEVLDIPRAGCINIHASLLPRWRGAAPIHRAIEAGDAETGVTLMQMDVGLDTGAMIEEARIAIAPDDTTATLHDRLAAAGARLIVDALVRLERDGTLPATPQPADGVTYAEKIGKHEAALDWRKPADVLARQVRAFDPFPGGVATLDGAAIKLWAAEPVAAHGTIATAAPGTIVEAAPEGVVVACGSGALRVTQLQKPGGKRLPAREFLAGSPLAAGQRFALPDVD.

121 to 124 (SLLP) provides a ligand contact to (6S)-5,6,7,8-tetrahydrofolate.

It belongs to the Fmt family.

It carries out the reaction L-methionyl-tRNA(fMet) + (6R)-10-formyltetrahydrofolate = N-formyl-L-methionyl-tRNA(fMet) + (6S)-5,6,7,8-tetrahydrofolate + H(+). In terms of biological role, attaches a formyl group to the free amino group of methionyl-tRNA(fMet). The formyl group appears to play a dual role in the initiator identity of N-formylmethionyl-tRNA by promoting its recognition by IF2 and preventing the misappropriation of this tRNA by the elongation apparatus. The protein is Methionyl-tRNA formyltransferase of Burkholderia orbicola (strain MC0-3).